Reading from the N-terminus, the 143-residue chain is Midkine (143 aa).

An N-terminal signal peptide occupies residues 1 to 20 (MQHRGFLLLTLLALLALTSA). 5 disulfide bridges follow: C37–C61, C45–C70, C52–C74, C84–C116, and C94–C126.

This sequence belongs to the pleiotrophin family. As to quaternary structure, homodimer. Interacts with ALK. Interacts with LRP1; promotes neuronal survival. Interacts with LRP2. Interacts with NCAM1. Interacts (via C-terminal) with PTPRZ1 (via chondroitin sulfate chains); this interaction is inhibited by PTN; this interaction promotes neuronal migration. Interacts with NCL; this interaction promotes NCL clustering and lateral movements of this complex into lipid rafts leading to MDK internalization. Interacts with LRP6 and LRP8: this interaction is calcium dependent. Interacts with ITGA4. Interacts with ITGA6. Interacts with ITGB1. Interacts with ITGA4:ITGB1 complex; this interaction mediates MDK-induced osteoblast cells migration through PXN phosphorylation. Interacts with ITGA6:ITGB1 complex; this interaction mediates MDK-induced neurite outgrowth. Interacts with NOTCH2; this interaction mediates a nuclear accumulation of NOTCH2 and therefore activation of NOTCH2 signaling leading to interaction between HES1 and STAT3. Interacts with GPC2 (via heparan sulfate chain); this interaction is inhibited by heparin followed by chondroitin sulfate E; this interaction induces GPC2 clustering through heparan sulfate chain; this interaction induces neuronal cell adhesion and neurite outgrowth. Interacts with SDC3; this interaction induces SDC3 clustering; this interaction induces neuronal cell adhesion and neurite outgrowth. Interacts with SDC1. Interacts with CSPG5; this interaction promotes elongation of oligodendroglial precursor-like cells. As to expression, expressed in various tumor cell lines. In insulinoma tissue predominantly expressed in precancerous lesions.

The protein localises to the secreted. In terms of biological role, secreted protein that functions as a cytokine and growth factor and mediates its signal through cell-surface proteoglycan and non-proteoglycan receptors. Binds cell-surface proteoglycan receptors via their chondroitin sulfate (CS) groups. Thereby regulates many processes like inflammatory response, cell proliferation, cell adhesion, cell growth, cell survival, tissue regeneration, cell differentiation and cell migration. Participates in inflammatory processes by exerting two different activities. Firstly, mediates neutrophils and macrophages recruitment to the sites of inflammation both by direct action by cooperating namely with ITGB2 via LRP1 and by inducing chemokine expression. This inflammation can be accompanied by epithelial cell survival and smooth muscle cell migration after renal and vessel damage, respectively. Secondly, suppresses the development of tolerogenic dendric cells thereby inhibiting the differentiation of regulatory T cells and also promote T cell expansion through NFAT signaling and Th1 cell differentiation. Promotes tissue regeneration after injury or trauma. After heart damage negatively regulates the recruitment of inflammatory cells and mediates cell survival through activation of anti-apoptotic signaling pathways via MAPKs and AKT pathways through the activation of angiogenesis. Also facilitates liver regeneration as well as bone repair by recruiting macrophage at trauma site and by promoting cartilage development by facilitating chondrocyte differentiation. Plays a role in brain by promoting neural precursor cells survival and growth through interaction with heparan sulfate proteoglycans. Binds PTPRZ1 and promotes neuronal migration and embryonic neurons survival. Binds SDC3 or GPC2 and mediates neurite outgrowth and cell adhesion. Binds chondroitin sulfate E and heparin leading to inhibition of neuronal cell adhesion induced by binding with GPC2. Binds CSPG5 and promotes elongation of oligodendroglial precursor-like cells. Also binds ITGA6:ITGB1 complex; this interaction mediates MDK-induced neurite outgrowth. Binds LRP1; promotes neuronal survival. Binds ITGA4:ITGB1 complex; this interaction mediates MDK-induced osteoblast cells migration through PXN phosphorylation. Binds anaplastic lymphoma kinase (ALK) which induces ALK activation and subsequent phosphorylation of the insulin receptor substrate (IRS1), followed by the activation of mitogen-activated protein kinase (MAPK) and PI3-kinase, and the induction of cell proliferation. Promotes epithelial to mesenchymal transition through interaction with NOTCH2. During arteriogenesis, plays a role in vascular endothelial cell proliferation by inducing VEGFA expression and release which in turn induces nitric oxide synthase expression. Moreover activates vasodilation through nitric oxide synthase activation. Negatively regulates bone formation in response to mechanical load by inhibiting Wnt/beta-catenin signaling in osteoblasts. In addition plays a role in hippocampal development, working memory, auditory response, early fetal adrenal gland development and the female reproductive system. The protein is Midkine of Homo sapiens (Human).